The following is a 225-amino-acid chain: Biosynthetic peptidoglycan transglycosylase (225 aa).

A helical transmembrane segment spans residues 8 to 28 (VLLIFIGAILLIQLWIFSSLV).

The protein belongs to the glycosyltransferase 51 family.

It is found in the cell inner membrane. The enzyme catalyses [GlcNAc-(1-&gt;4)-Mur2Ac(oyl-L-Ala-gamma-D-Glu-L-Lys-D-Ala-D-Ala)](n)-di-trans,octa-cis-undecaprenyl diphosphate + beta-D-GlcNAc-(1-&gt;4)-Mur2Ac(oyl-L-Ala-gamma-D-Glu-L-Lys-D-Ala-D-Ala)-di-trans,octa-cis-undecaprenyl diphosphate = [GlcNAc-(1-&gt;4)-Mur2Ac(oyl-L-Ala-gamma-D-Glu-L-Lys-D-Ala-D-Ala)](n+1)-di-trans,octa-cis-undecaprenyl diphosphate + di-trans,octa-cis-undecaprenyl diphosphate + H(+). Its pathway is cell wall biogenesis; peptidoglycan biosynthesis. In terms of biological role, peptidoglycan polymerase that catalyzes glycan chain elongation from lipid-linked precursors. This is Biosynthetic peptidoglycan transglycosylase from Acinetobacter baumannii (strain ACICU).